The following is a 129-amino-acid chain: UPF0102 protein Clim_0016 (129 aa).

The protein belongs to the UPF0102 family.

In Chlorobium limicola (strain DSM 245 / NBRC 103803 / 6330), this protein is UPF0102 protein Clim_0016.